The sequence spans 137 residues: Nucleoside diphosphate kinase (137 aa).

The ATP site is built by Lys-9, Phe-57, Arg-85, Thr-91, Arg-102, and Asn-112. The Pros-phosphohistidine intermediate role is filled by His-115.

The protein belongs to the NDK family. In terms of assembly, homotetramer. Mg(2+) is required as a cofactor.

The protein localises to the cytoplasm. It catalyses the reaction a 2'-deoxyribonucleoside 5'-diphosphate + ATP = a 2'-deoxyribonucleoside 5'-triphosphate + ADP. It carries out the reaction a ribonucleoside 5'-diphosphate + ATP = a ribonucleoside 5'-triphosphate + ADP. Major role in the synthesis of nucleoside triphosphates other than ATP. The ATP gamma phosphate is transferred to the NDP beta phosphate via a ping-pong mechanism, using a phosphorylated active-site intermediate. The polypeptide is Nucleoside diphosphate kinase (Campylobacter jejuni subsp. doylei (strain ATCC BAA-1458 / RM4099 / 269.97)).